A 346-amino-acid chain; its full sequence is Formimidoylglutamase (346 aa).

Positions 145, 180, 182, 184, 271, and 273 each coordinate Mn(2+).

The protein belongs to the arginase family. Mn(2+) serves as cofactor.

It carries out the reaction N-formimidoyl-L-glutamate + H2O = formamide + L-glutamate. It functions in the pathway amino-acid degradation; L-histidine degradation into L-glutamate; L-glutamate from N-formimidoyl-L-glutamate (hydrolase route): step 1/1. Catalyzes the conversion of N-formimidoyl-L-glutamate to L-glutamate and formamide. In Psychrobacter cryohalolentis (strain ATCC BAA-1226 / DSM 17306 / VKM B-2378 / K5), this protein is Formimidoylglutamase.